The primary structure comprises 171 residues: Regulator of ribonuclease activity A (171 aa).

It belongs to the RraA family. Homotrimer. Binds to both RNA-binding sites in the C-terminal region of Rne and to RhlB.

The protein resides in the cytoplasm. Functionally, globally modulates RNA abundance by binding to RNase E (Rne) and regulating its endonucleolytic activity. Can modulate Rne action in a substrate-dependent manner by altering the composition of the degradosome. Modulates RNA-binding and helicase activities of the degradosome. This chain is Regulator of ribonuclease activity A, found in Vibrio cholerae serotype O1 (strain ATCC 39315 / El Tor Inaba N16961).